A 156-amino-acid polypeptide reads, in one-letter code: 6,7-dimethyl-8-ribityllumazine synthase (156 aa).

5-amino-6-(D-ribitylamino)uracil is bound by residues Phe-22, 57–59 (AVE), and 81–83 (SVI). Residue 86 to 87 (GT) coordinates (2S)-2-hydroxy-3-oxobutyl phosphate. Catalysis depends on His-89, which acts as the Proton donor. Residue Phe-114 coordinates 5-amino-6-(D-ribitylamino)uracil. Position 128 (Arg-128) interacts with (2S)-2-hydroxy-3-oxobutyl phosphate.

The protein belongs to the DMRL synthase family. In terms of assembly, forms an icosahedral capsid composed of 60 subunits, arranged as a dodecamer of pentamers.

The catalysed reaction is (2S)-2-hydroxy-3-oxobutyl phosphate + 5-amino-6-(D-ribitylamino)uracil = 6,7-dimethyl-8-(1-D-ribityl)lumazine + phosphate + 2 H2O + H(+). Its pathway is cofactor biosynthesis; riboflavin biosynthesis; riboflavin from 2-hydroxy-3-oxobutyl phosphate and 5-amino-6-(D-ribitylamino)uracil: step 1/2. Functionally, catalyzes the formation of 6,7-dimethyl-8-ribityllumazine by condensation of 5-amino-6-(D-ribitylamino)uracil with 3,4-dihydroxy-2-butanone 4-phosphate. This is the penultimate step in the biosynthesis of riboflavin. The chain is 6,7-dimethyl-8-ribityllumazine synthase from Aliivibrio salmonicida (strain LFI1238) (Vibrio salmonicida (strain LFI1238)).